We begin with the raw amino-acid sequence, 390 residues long: Levoglucosan dehydrogenase (390 aa).

The NADH site is built by F13, M14, E43, T81, N83, H86, E103, K104, A130, and N132. K104 is a levoglucosan binding site. Residues Y133 and Q163 each contribute to the levoglucosan site. NADH is bound by residues W175 and R176. R176, D189, and H193 together coordinate levoglucosan. Residue Y335 coordinates NADH.

It belongs to the Gfo/Idh/MocA family. In terms of assembly, homotetramer.

It catalyses the reaction levoglucosan + NAD(+) = 3-dehydrolevoglucosan + NADH + H(+). In terms of biological role, catalyzes the oxidation of levoglucosan (1,6-anhydro-beta-D-glucose, LG) to 3-dehydrolevoglucosan (3-keto-LG). Exhibits high substrate specificity toward levoglucosan and NAD(+) for the oxidative reaction. Exhibits weak activities (about 4% compared with that of LG) toward L-sorbose and 1,5-anhydro-D-glucitol, and activity toward D-xylose is also detectable (1.7%). Can also efficiently catalyzes the NADH-dependent reduction (reverse reaction) of 3-keto-LG. This is Levoglucosan dehydrogenase from Pseudarthrobacter phenanthrenivorans (strain DSM 18606 / JCM 16027 / LMG 23796 / Sphe3) (Arthrobacter phenanthrenivorans).